The primary structure comprises 832 residues: Serine/threonine-protein kinase Doa (832 aa).

Disordered stretches follow at residues M1–I86, L135–P158, S179–P215, and S258–Q419. Residues V8–T18 show a composition bias toward polar residues. Positions R20–L32 are enriched in basic and acidic residues. Low complexity-rich tracts occupy residues T40–N53, Q137–P158, and M183–Q203. Residues H271–T282 show a composition bias toward polar residues. 3 stretches are compositionally biased toward low complexity: residues Q285–H310, Q347–Q365, and S396–Q419. Residues Y479–F799 enclose the Protein kinase domain. ATP is bound by residues L485–V493 and K508. Residue D605 is the Proton acceptor of the active site. Residues G809–R832 form a disordered region. The segment covering S823–R832 has biased composition (basic and acidic residues).

The protein belongs to the protein kinase superfamily. CMGC Ser/Thr protein kinase family. Lammer subfamily. Interacts (via N-terminus) with x16 (via Arg/Ser-rich region). Interacts with eEF1gamma (via C-terminus); the interaction is probably direct, is transient and leads to phosphorylation of eEF1gamma by Doa. The cofactor is Mg(2+). In terms of processing, autophosphorylated on serine, threonine and tyrosine residues. Ubiquitous expression in embryos. Stage 17 embryos show elevated expression in CNS and brain. Ubiquitous expression in larval imaginal disks. Increased expression posterior to the eye-antennal disk morphogenetic furrow.

The protein localises to the cytoplasm. It is found in the cytosol. It localises to the nucleus. It catalyses the reaction L-seryl-[protein] + ATP = O-phospho-L-seryl-[protein] + ADP + H(+). The enzyme catalyses L-threonyl-[protein] + ATP = O-phospho-L-threonyl-[protein] + ADP + H(+). The catalysed reaction is L-tyrosyl-[protein] + ATP = O-phospho-L-tyrosyl-[protein] + ADP + H(+). In terms of biological role, dual specificity kinase involved in the negative regulation of microtubule-based transport through phsophorylation of the microtuble-binding protein eEF1gamma. May function in the control of alternative splicing by phosphorylating serine/arginine-rich splicing factors, the SR proteins, including x16. Negative regulator of the copia retrotransposon element of the white (w) gene. In the eye, it is required for normal pigmentation, photoreceptor cell development and for organization of interommatidial bristles. Also essential for embryonic segmentation and differentiation of the nervous system. May be the specific isoform involved in regulation of microtubule-based transport through phosphorylation of the microtubule binding protein eEF1gamma. In Drosophila melanogaster (Fruit fly), this protein is Serine/threonine-protein kinase Doa.